A 169-amino-acid polypeptide reads, in one-letter code: X polypeptide (169 aa).

Belongs to the IagB/IpgF/P19 family.

The chain is X polypeptide (X) from Escherichia coli.